We begin with the raw amino-acid sequence, 304 residues long: GTPase Era (304 aa).

In terms of domain architecture, Era-type G spans 9–177 (HSGFVAIVGR…VTTLSQHMPE (169 aa)). The interval 17 to 24 (GRPNVGKS) is G1. 17–24 (GRPNVGKS) serves as a coordination point for GTP. The tract at residues 43–47 (QTTRN) is G2. The segment at 64-67 (DTPG) is G3. Residues 64–68 (DTPGI) and 127–130 (NKID) each bind GTP. A G4 region spans residues 127–130 (NKID). The tract at residues 156-158 (ISA) is G5. Positions 208–285 (TRQEVPHSVA…YLELWVKVSE (78 aa)) constitute a KH type-2 domain.

The protein belongs to the TRAFAC class TrmE-Era-EngA-EngB-Septin-like GTPase superfamily. Era GTPase family. Monomer.

Its subcellular location is the cytoplasm. It localises to the cell membrane. In terms of biological role, an essential GTPase that binds both GDP and GTP, with rapid nucleotide exchange. Plays a role in 16S rRNA processing and 30S ribosomal subunit biogenesis and possibly also in cell cycle regulation and energy metabolism. The polypeptide is GTPase Era (Pediococcus pentosaceus (strain ATCC 25745 / CCUG 21536 / LMG 10740 / 183-1w)).